Here is a 270-residue protein sequence, read N- to C-terminus: Tubulin-specific chaperone B (270 aa).

The region spanning 214 to 256 (GTVEFSSGVWIGVELDLPLGKNDGSVKGKQYFQCSPKYGCFAK) is the CAP-Gly domain.

It belongs to the TBCB family. In terms of assembly, supercomplex made of cofactors A to E. Cofactors A and D function by capturing and stabilizing tubulin in a quasi-native conformation. Cofactor E binds to the cofactor D-tubulin complex; interaction with cofactor C then causes the release of tubulin polypeptides that are committed to the native state.

The protein localises to the cytoplasm. Its subcellular location is the cytoskeleton. Functionally, binds to alpha-tubulin folding intermediates after their interaction with cytosolic chaperonin in the pathway leading from newly synthesized tubulin to properly folded heterodimer. This Dictyostelium discoideum (Social amoeba) protein is Tubulin-specific chaperone B (tbcb).